Consider the following 525-residue polypeptide: GMP synthase [glutamine-hydrolyzing] (525 aa).

Positions 8–207 (KILILDFGSQ…ALDICGCDAN (200 aa)) constitute a Glutamine amidotransferase type-1 domain. The active-site Nucleophile is Cys85. Active-site residues include His181 and Glu183. In terms of domain architecture, GMPS ATP-PPase spans 208–400 (WKPSSIIEDA…LGLPYDMLYR (193 aa)). ATP is bound at residue 235–241 (SGGVDSS).

As to quaternary structure, homodimer.

The catalysed reaction is XMP + L-glutamine + ATP + H2O = GMP + L-glutamate + AMP + diphosphate + 2 H(+). It functions in the pathway purine metabolism; GMP biosynthesis; GMP from XMP (L-Gln route): step 1/1. Its function is as follows. Catalyzes the synthesis of GMP from XMP. The protein is GMP synthase [glutamine-hydrolyzing] of Shewanella piezotolerans (strain WP3 / JCM 13877).